The following is a 663-amino-acid chain: Protein associated with UVRAG as autophagy enhancer (663 aa).

2 disordered regions span residues 1 to 36 (MVSQ…LDTE) and 65 to 136 (DASP…EERA). Polar residues-rich tracts occupy residues 80-93 (TASN…TSPL) and 105-130 (PKGT…SSVT). The interaction with UVRAG stretch occupies residues 196-235 (EAFVLPVDAEKENAHFYVADMIISVMEKMKCNILSQQHTE). N6-acetyllysine occurs at positions 484, 534, 574, and 634.

Interacts with UVRAG; the interaction is direct and promotes association with the PI3K/PI3KC3 and HOPS complexes. Interacts with STX17. In terms of processing, acetylated by KAT5/TIP60 under autophagy induction, promoting autophagosome maturation and lipid metabolism. Lys-484 and Lys-574 constitute the key sites for tuning function in autophagy.

Its subcellular location is the cytoplasmic vesicle. The protein resides in the autophagosome membrane. Functionally, regulator of autophagy that promotes autophagosome maturation by facilitating the biogenesis of phosphatidylinositol 3-phosphate (PtdIns(3)P) in late steps of autophagy. Acts by antagonizing RUBCN, thereby stimulating phosphatidylinositol 3-kinase activity of the PI3K/PI3KC3 complex. Following anchorage to the autophagosomal SNARE STX17, promotes the recruitment of PI3K/PI3KC3 and HOPS complexes to the autophagosome to regulate the fusion specificity of autophagosomes with late endosomes/lysosomes. Binds phosphoinositides phosphatidylinositol 3-phosphate (PtdIns(3)P), 4-phosphate (PtdIns(4)P) and 5-phosphate (PtdIns(5)P). In addition to its role in autophagy, acts as a regulator of lipid and glycogen homeostasis. May act as a tumor suppressor. This Bos taurus (Bovine) protein is Protein associated with UVRAG as autophagy enhancer.